The sequence spans 1551 residues: Transient receptor potential cation channel subfamily M member-like 2 (1551 aa).

Topologically, residues 1-714 (MGKDSFTPLY…WMGTMAMNTR (714 aa)) are cytoplasmic. An intramembrane segment occupies 715 to 730 (WWKVLVCLYLPVLIFP). Topologically, residues 731–837 (IIYFVPDEQH…DRIMHFYSAP (107 aa)) are cytoplasmic. The tract at residues 744-767 (AAEREHQKSLNQKSSKVKSHKEKN) is disordered. The chain crosses the membrane as a helical span at residues 838-858 (FSKFVGNVVGYLAFIFLYAYV). The Extracellular portion of the chain corresponds to 859–877 (VLFNFPRFDPAKTLGGIHP). A helical transmembrane segment spans residues 878–898 (TEIVLYFWVFTILIEEIRQLA). Ca(2+) is bound by residues Glu893 and Gln896. The Cytoplasmic portion of the chain corresponds to 899–916 (AKPPKYIKDKVSVYFSDT). Residues 917 to 937 (WNFVDIFSLTVFIIAIILRFF) traverse the membrane as a helical segment. Residues Asn918 and Asp921 each coordinate Ca(2+). The Extracellular portion of the chain corresponds to 938–947 (TNSRIFTASR). A helical transmembrane segment spans residues 948-968 (IILSLDIIFFIVRSLQIFSVN). Over 969–980 (RLLGPKLVMIQK) the chain is Cytoplasmic. Residues 981 to 1001 (MMQDLAQFIIILAVFTIAYGI) traverse the membrane as a helical segment. The Extracellular portion of the chain corresponds to 1002–1018 (ALHAVMFPSPGIYARNN). Asn1017 carries an N-linked (GlcNAc...) asparagine glycan. An intramembrane region (pore-forming) is located at residues 1019–1034 (TWVTITSVVQYPYWQM). The Selectivity filter signature appears at 1035 to 1037 (YGE). Residues 1035-1059 (YGELFLDEIQGEKPKEFGEVDPDGR) lie on the Extracellular side of the membrane. Residues 1040-1042 (LDE) carry the Prevents fast channel inactivation motif. A helical transmembrane segment spans residues 1060–1080 (WLSPLLLAIYMVFTNILLLNL). Residues 1081-1116 (LIAIFNYTFERVQEDSDKVWKFQRYDLVQEYHSRPV) are Cytoplasmic-facing. An intramembrane segment occupies 1117–1135 (FAPPLVLLGHILIFIRWVW). The Cytoplasmic segment spans residues 1136-1551 (RMCRCGHPPR…KVAKMRDAAF (416 aa)). Residues 1184-1209 (LEERVRALGDRVDCINSQLNRVLDSM) adopt a coiled-coil conformation. The region spanning 1394–1546 (WKRTSAGVML…VSILEKVAKM (153 aa)) is the Nudix hydrolase domain. The Nudix box signature appears at 1428-1449 (GMVEPGQLVTQALKAEFGEEAM).

It belongs to the transient receptor (TC 1.A.4) family. LTrpC subfamily. TRPM2 sub-subfamily. As to quaternary structure, homotetramer.

It localises to the cell membrane. Activated by phosphatidylinositol 4,5-bisphosphate (PIP2). Although PIP2 is essential for the channel activation, its contribution to the level of channel activity is minimal. Also activated by diphosphate ribose-2'-phosphate. Upon binding to ADPR, channel activation requires only a short initial cytosolic Ca(2+) increase, then the activation is sustained by the uptake of extracellular Ca(2+). Activated by 2-aminoethyl diphenylborinate (2-APB) in a Ca(2+)-dependent manner. 2-APB prevents the inactivation of the channel. Its function is as follows. Nonselective, voltage-independent cation channel that mediates Ca(2+) and to a lesser extent Na(+) influx, leading to increased cytoplasmic Ca(2+) levels. Functions as a ligand-gated ion channel. Binding of ADP-ribose causes a conformation change; the channel is primed but still requires Ca(2+) binding to trigger channel opening. May have ADP-ribose pyrophosphatase activity which reduces ADP-ribose levels induced by oxidative stress, thus preventing the channel activation by reactive oxygen species. This is Transient receptor potential cation channel subfamily M member-like 2 from Nematostella vectensis (Starlet sea anemone).